The following is a 2360-amino-acid chain: Nucleoprotein TPR (2360 aa).

Ala2 carries the N-acetylalanine modification. The segment at 3–13 (AVLQQVLERPE) is sufficient for interaction with TPR. The segment at 14 to 117 (LNKLPKSTQN…GIQSQFTRAK (104 aa)) is necessary for interaction with HSF1. Positions 24 to 370 (KLEKFLAEQQ…SATKRKGAIL (347 aa)) form a coiled coil. N6-acetyllysine is present on residues Lys252, Lys312, and Lys345. Ser379 bears the Phosphoserine mark. Positions 423-603 (LDEIVKEVEA…RESRQHQMQL (181 aa)) form a coiled coil. 3 positions are modified to N6-acetyllysine: Lys428, Lys457, and Lys477. The necessary for association to the NPC stretch occupies residues 437-513 (LKRQREEYER…LMELEEARGN (77 aa)). Residues Ser522, Ser523, and Ser632 each carry the phosphoserine modification. A coiled-coil region spans residues 664-1172 (ETIEAKAALK…IEKLSDKVVT (509 aa)). An N6-acetyllysine mark is found at Lys713, Lys723, Lys748, and Lys755. Over residues 915-924 (LASQSTQRTG) the composition is skewed to polar residues. The segment at 915–939 (LASQSTQRTGKGQPGDRDDVDDLKS) is disordered. Residues 928-939 (PGDRDDVDDLKS) are compositionally biased toward basic and acidic residues. 2 positions are modified to phosphoserine: Ser1180 and Ser1185. 2 coiled-coil regions span residues 1215–1420 (EVAQ…LDAK) and 1472–1629 (VQEM…QRDE). Residues 1218–1320 (QVESLRYRQR…NAELSEKSGM (103 aa)) are necessary for interaction with HSF1. Disordered regions lie at residues 1479 to 1520 (KDNL…TAQL) and 1618 to 1673 (EHQE…PTPV). Composition is skewed to basic and acidic residues over residues 1503 to 1512 (LSEKETEARS) and 1618 to 1630 (EHQE…RDEP). A compositionally biased stretch (polar residues) spans 1632–1651 (EPTNKAPEQQRQITLKTTPA). Lys1689 is subject to N6-acetyllysine. Phosphothreonine is present on Thr1691. Positions 1801-1826 (QSSPVERPSTSTAVFGTVSATPSSSL) are enriched in polar residues. The disordered stretch occupies residues 1801–2122 (QSSPVERPST…TPGIGGMQQH (322 aa)). The tract at residues 1811-1866 (STAVFGTVSATPSSSLPKRAREEEEDSTIEAGDQVSDDTVEMPLPKKLKTVTPVGT) is sufficient and essential for mediating its nuclear import. Over residues 1866-1880 (TEEEVMAEESTDGEA) the composition is skewed to acidic residues. Over residues 1881–1892 (ETQTYNQDSQDS) the composition is skewed to polar residues. A Phosphoserine modification is found at Ser1892. Residues 1923-1934 (QSDQQTTSSQDG) are compositionally biased toward low complexity. 2 stretches are compositionally biased toward acidic residues: residues 1945–1986 (DSDD…EDSN) and 1996–2017 (DGYE…ETEE). The segment covering 2023-2061 (ESNQRAADSQNSGEGNTSAAESSFSQEVAREQQPTSASE) has biased composition (polar residues). Phosphoserine is present on residues Ser2031, Ser2034, Ser2045, Ser2047, and Ser2070. Omega-N-methylarginine is present on residues Arg2103 and Arg2108. A phosphothreonine mark is found at Thr2113 and Thr2134. At Ser2152 the chain carries Phosphoserine. Arg2160 is subject to Omega-N-methylarginine. A compositionally biased stretch (polar residues) spans 2224-2241 (ESTTSDASEHASQSVPMV). Positions 2224–2360 (ESTTSDASEH…RGGINRGNIN (137 aa)) are disordered. Residues 2242 to 2254 (TTSTGTLSTTNET) are compositionally biased toward low complexity. Acidic residues-rich tracts occupy residues 2256 to 2269 (AGDD…ETES) and 2282 to 2296 (SQQE…DESD). The span at 2297–2317 (LPSTSQDPPSSSSVDTSSSQP) shows a compositional bias: low complexity. 3 positions are modified to asymmetric dimethylarginine: Arg2340, Arg2342, and Arg2351. Gly residues predominate over residues 2349–2360 (GGRGGINRGNIN).

The protein belongs to the TPR family. Homodimer. Part of the nuclear pore complex (NPC). Associates with the XPO1/CRM1-mediated nuclear export complex, the Importin alpha/Importin beta receptor and the dynein 1 complex. Interacts (via C-terminal domain) with the KPNB1; the interaction occurs in a RanGTP-dependent manner. Interacts (via C-terminal region and phosphorylated form) with MAPK1/ERK2 (via phosphorylated form); the interaction requires dimerization of MAPK1/ERK2 and increases following EGF stimulation. Interacts with MAPK3/ERK1; the interaction increases following EGF stimulation. Interacts (via coiled coil region) with NUP153; the interaction is direct. Interacts with HSF1; the interaction increases in a stress-responsive manner and stimulates export of stress-induced HSP70 mRNA. Interacts with huntingtin/HTT; the interaction is inhibited by aggregated huntingtin/HTT forms with expanded polyglutamine stretch. Interacts with MAD1L1 (via N-terminal region), MAD2L1, and TTK; the interactions occurs in a microtubule-independent manner. Interacts (via middle region) with DYNLL1. Interacts with DCTN1, dynein, NUP153 and tubulin. Interacts with IFI204 (via C-terminal region). Interacts with IFI203. Interacts with MTA1. Interacts with ZC3HC1; this interaction mediates ZC3HC1 nuclear envelopes (NE)-association but also required for proper positioning of a substantial amount of TPR at the nuclear basket (NB). In terms of processing, phosphorylated. Phosphorylation occurs on serine and threonine residues (comprised in the C-terminal region) by MAPK1/ERK2 and stabilizes the interaction between these two proteins.

It is found in the nucleus. Its subcellular location is the nucleus membrane. The protein resides in the nucleus envelope. It localises to the nuclear pore complex. The protein localises to the cytoplasm. It is found in the cytoskeleton. Its subcellular location is the spindle. The protein resides in the chromosome. It localises to the centromere. The protein localises to the kinetochore. Its function is as follows. Component of the nuclear pore complex (NPC), a complex required for the trafficking across the nuclear envelope. Functions as a scaffolding element in the nuclear phase of the NPC essential for normal nucleocytoplasmic transport of proteins and mRNAs, plays a role in the establishment of nuclear-peripheral chromatin compartmentalization in interphase, and in the mitotic spindle checkpoint signaling during mitosis. Involved in the quality control and retention of unspliced mRNAs in the nucleus; in association with NUP153, regulates the nuclear export of unspliced mRNA species bearing constitutive transport element (CTE) in a NXF1- and KHDRBS1-independent manner. Negatively regulates both the association of CTE-containing mRNA with large polyribosomes and translation initiation. Does not play any role in Rev response element (RRE)-mediated export of unspliced mRNAs. Implicated in nuclear export of mRNAs transcribed from heat shock gene promoters; associates both with chromatin in the HSP70 promoter and with mRNAs transcribed from this promoter under stress-induced conditions. Modulates the nucleocytoplasmic transport of activated MAPK1/ERK2 and huntingtin/HTT and may serve as a docking site for the XPO1/CRM1-mediated nuclear export complex. Also plays a role as a structural and functional element of the perinuclear chromatin distribution; involved in the formation and/or maintenance of NPC-associated perinuclear heterochromatin exclusion zones (HEZs). Finally, acts as a spatial regulator of the spindle-assembly checkpoint (SAC) response ensuring a timely and effective recruitment of spindle checkpoint proteins like MAD1L1 and MAD2L1 to unattached kinetochore during the metaphase-anaphase transition before chromosome congression. Its N-terminus is involved in activation of oncogenic kinases. Plays a role in the regulation of nuclear protein export. The chain is Nucleoprotein TPR from Rattus norvegicus (Rat).